Reading from the N-terminus, the 394-residue chain is Acid ceramidase (394 aa).

An N-terminal signal peptide occupies residues 1–20 (MLGRSLLTWVLAAAVTCAQA). The cysteines at positions 30 and 339 are disulfide-linked. The Nucleophile role is filled by cysteine 142. Residues asparagine 194, asparagine 258, asparagine 285, and asparagine 341 are each glycosylated (N-linked (GlcNAc...) asparagine). A disulfide bridge links cysteine 387 with cysteine 391.

This sequence belongs to the acid ceramidase family. Heterodimer; disulfide-linked. The heterodimer is composed of the disulfide-linked alpha and beta chains produced by autocatalytic cleavage of the precursor. In terms of processing, N-glycosylated. Proteolytically cleaved into two chains alpha and beta that remain associated via a disulfide bond. Cleavage gives rise to a conformation change that activates the enzyme. The same catalytic Cys residue mediates the autoproteolytic cleavage and subsequent hydrolysis of lipid substrates. The beta chain may undergo an additional C-terminal processing.

Its subcellular location is the lysosome. It localises to the secreted. The catalysed reaction is an N-acylsphing-4-enine + H2O = sphing-4-enine + a fatty acid. It catalyses the reaction N-dodecanoylsphing-4-enine + H2O = dodecanoate + sphing-4-enine. It carries out the reaction N-tetradecanoylsphing-4-enine + H2O = tetradecanoate + sphing-4-enine. The enzyme catalyses N-hexadecanoylsphing-4-enine + H2O = sphing-4-enine + hexadecanoate. The catalysed reaction is N-octadecanoylsphing-4-enine + H2O = sphing-4-enine + octadecanoate. It catalyses the reaction N-dodecanoyl-(4R)-hydroxysphinganine + H2O = (4R)-hydroxysphinganine + dodecanoate. It carries out the reaction N-(dodecanoyl)-sphinganine + H2O = dodecanoate + sphinganine. The enzyme catalyses N-(acetyl)-sphing-4-enine + H2O = sphing-4-enine + acetate. The catalysed reaction is N-(hexanoyl)sphing-4-enine + H2O = hexanoate + sphing-4-enine. It catalyses the reaction N-octanoylsphing-4-enine + H2O = octanoate + sphing-4-enine. It carries out the reaction N-(9Z-octadecenoyl)-sphing-4-enine + H2O = sphing-4-enine + (9Z)-octadecenoate. The enzyme catalyses N-dodecanoylethanolamine + H2O = dodecanoate + ethanolamine. It participates in lipid metabolism; sphingolipid metabolism. Its function is as follows. Lysosomal ceramidase that hydrolyzes sphingolipid ceramides into sphingosine and free fatty acids at acidic pH. Ceramides, sphingosine, and its phosphorylated form sphingosine-1-phosphate are bioactive lipids that mediate cellular signaling pathways regulating several biological processes including cell proliferation, apoptosis and differentiation. Has a higher catalytic efficiency towards C12-ceramides versus other ceramides. Also catalyzes the reverse reaction allowing the synthesis of ceramides from fatty acids and sphingosine. For the reverse synthetic reaction, the natural sphingosine D-erythro isomer is more efficiently utilized as a substrate compared to D-erythro-dihydrosphingosine and D-erythro-phytosphingosine, while the fatty acids with chain lengths of 12 or 14 carbons are the most efficiently used. Also has an N-acylethanolamine hydrolase activity. By regulating the levels of ceramides, sphingosine and sphingosine-1-phosphate in the epidermis, mediates the calcium-induced differentiation of epidermal keratinocytes. Also indirectly regulates tumor necrosis factor/TNF-induced apoptosis. By regulating the intracellular balance between ceramides and sphingosine, in adrenocortical cells, probably also acts as a regulator of steroidogenesis. This chain is Acid ceramidase, found in Rattus norvegicus (Rat).